Reading from the N-terminus, the 169-residue chain is Lipoprotein signal peptidase (169 aa).

4 helical membrane passes run 4 to 24 (PICS…ILDI), 29 to 49 (WVMA…FNLT), 70 to 90 (WFFA…MYRS), and 101 to 121 (YALI…HGAV). Active-site residues include aspartate 123 and aspartate 141. The helical transmembrane segment at 137 to 157 (FNLADVAISIGAVLVIFEGFL) threads the bilayer.

The protein belongs to the peptidase A8 family.

It is found in the cell inner membrane. The enzyme catalyses Release of signal peptides from bacterial membrane prolipoproteins. Hydrolyzes -Xaa-Yaa-Zaa-|-(S,diacylglyceryl)Cys-, in which Xaa is hydrophobic (preferably Leu), and Yaa (Ala or Ser) and Zaa (Gly or Ala) have small, neutral side chains.. Its pathway is protein modification; lipoprotein biosynthesis (signal peptide cleavage). This protein specifically catalyzes the removal of signal peptides from prolipoproteins. The sequence is that of Lipoprotein signal peptidase from Yersinia pseudotuberculosis serotype O:1b (strain IP 31758).